The sequence spans 374 residues: Centrosomal protein of 41 kDa (374 aa).

A Rhodanese domain is found at 176–273 (PDCPYLLLDV…VAQKFPEGMT (98 aa)). Disordered stretches follow at residues 279-301 (ISCLPSPTGPAGRKRSAQHQTSQ) and 329-374 (ETSS…RPWK). Positions 329 to 349 (ETSSRLSSRMSTSSARSKAST) are enriched in low complexity.

It belongs to the CEP41 family. In terms of tissue distribution, expressed in various ciliary organs, including Kupffer's vesicle, ear and heart, as well as brain and kidney.

Its subcellular location is the cytoplasm. The protein localises to the cytoskeleton. It is found in the microtubule organizing center. The protein resides in the centrosome. It localises to the cell projection. Its subcellular location is the cilium. The protein localises to the cilium basal body. Its function is as follows. Required during ciliogenesis for tubulin glutamylation in cilium. Probably acts by participating in the transport of tubulin polyglutamylases between the basal body and the cilium. The chain is Centrosomal protein of 41 kDa (cep41) from Danio rerio (Zebrafish).